Here is a 204-residue protein sequence, read N- to C-terminus: ADP-ribosylation factor-like protein 15 (204 aa).

GTP is bound by residues 39-46 (GLTGSGKT), 82-86 (ELGGA), and 142-145 (NHQD).

This sequence belongs to the small GTPase superfamily. Arf family.

This Homo sapiens (Human) protein is ADP-ribosylation factor-like protein 15 (ARL15).